The sequence spans 341 residues: Anthranilate phosphoribosyltransferase (341 aa).

Residues Gly-79, 82–83, Thr-87, 89–92, 107–115, and Ser-119 contribute to the 5-phospho-alpha-D-ribose 1-diphosphate site; these read GD, NIST, and KHGNRAATS. Residue Gly-79 coordinates anthranilate. Ser-91 provides a ligand contact to Mg(2+). Anthranilate is bound at residue Asn-110. Arg-165 contributes to the anthranilate binding site. Mg(2+)-binding residues include Asp-224 and Glu-225.

This sequence belongs to the anthranilate phosphoribosyltransferase family. In terms of assembly, homodimer. Mg(2+) is required as a cofactor.

It catalyses the reaction N-(5-phospho-beta-D-ribosyl)anthranilate + diphosphate = 5-phospho-alpha-D-ribose 1-diphosphate + anthranilate. It participates in amino-acid biosynthesis; L-tryptophan biosynthesis; L-tryptophan from chorismate: step 2/5. Functionally, catalyzes the transfer of the phosphoribosyl group of 5-phosphorylribose-1-pyrophosphate (PRPP) to anthranilate to yield N-(5'-phosphoribosyl)-anthranilate (PRA). The sequence is that of Anthranilate phosphoribosyltransferase from Symbiobacterium thermophilum (strain DSM 24528 / JCM 14929 / IAM 14863 / T).